The chain runs to 520 residues: Ribonuclease Y (520 aa).

Residues 4–24 form a helical membrane-spanning segment; that stretch reads TVWILISILLATVGAVVGFFV. Residues 210–273 form the KH domain; that stretch reads TVSVVNLPND…ETARIALDKL (64 aa). Residues 336 to 429 form the HD domain; that stretch reads VLKHSMEVAY…VAAADALSAA (94 aa).

The protein belongs to the RNase Y family.

Its subcellular location is the cell membrane. Functionally, endoribonuclease that initiates mRNA decay. The sequence is that of Ribonuclease Y from Bacillus cereus (strain ZK / E33L).